The chain runs to 60 residues: Large ribosomal subunit protein bL32 (60 aa).

Positions 1-23 are enriched in basic residues; the sequence is MAKHPVPKKKTSKARRDARRSHH. The interval 1-28 is disordered; the sequence is MAKHPVPKKKTSKARRDARRSHHALTPP.

Belongs to the bacterial ribosomal protein bL32 family. Part of the 50S ribosomal subunit.

Functionally, found on the solvent side of the large subunit. The sequence is that of Large ribosomal subunit protein bL32 (rpmF) from Thermus thermophilus (strain ATCC BAA-163 / DSM 7039 / HB27).